The following is a 143-amino-acid chain: Holo-[acyl-carrier-protein] synthase (143 aa).

Asp-8 and Glu-62 together coordinate Mg(2+).

Belongs to the P-Pant transferase superfamily. AcpS family. Mg(2+) is required as a cofactor.

It is found in the cytoplasm. The enzyme catalyses apo-[ACP] + CoA = holo-[ACP] + adenosine 3',5'-bisphosphate + H(+). Its function is as follows. Transfers the 4'-phosphopantetheine moiety from coenzyme A to a Ser of acyl-carrier-protein. This Cupriavidus metallidurans (strain ATCC 43123 / DSM 2839 / NBRC 102507 / CH34) (Ralstonia metallidurans) protein is Holo-[acyl-carrier-protein] synthase.